Here is a 213-residue protein sequence, read N- to C-terminus: Golgi to ER traffic protein 1 (213 aa).

Topologically, residues 1 to 4 are lumenal; the sequence is MESW. A helical membrane pass occupies residues 5-25; it reads LLVILAFLVLERLWPLIDSLI. Residues 26-98 are Cytoplasmic-facing; it reads QRFAQANSTK…RTKASLKKVK (73 aa). Residues 55 to 99 adopt a coiled-coil conformation; the sequence is AQDQYVKWTKNNRTLEKINKQIEEEKKQLLSQVDRTKASLKKVKL. The helical transmembrane segment at 99–119 threads the bilayer; the sequence is LVLITVPFTILKFYKGKMPIY. The Lumenal portion of the chain corresponds to 120–158; sequence DLPKGLFPNYLQGLFQHGWVYLALGPLNIKKVGDGTHVT. The chain crosses the membrane as a helical span at residues 159 to 175; that stretch reads VSLAIWLFALLKVVSTL. Over 176-213 the chain is Cytoplasmic; that stretch reads GNIWESLTAPAIPAPTITTDPIDQTNESEKPPVDQPVD. The interval 193-213 is disordered; sequence TTDPIDQTNESEKPPVDQPVD.

The protein belongs to the WRB/GET1 family. In terms of assembly, component of the Golgi to ER traffic (GET) complex, which is composed of GET1, GET2 and GET3. Within the complex, GET1 and GET2 form a heterotetramer which is stabilized by phosphatidylinositol binding and which binds to the GET3 homodimer.

Its subcellular location is the endoplasmic reticulum membrane. It localises to the golgi apparatus membrane. Its function is as follows. Required for the post-translational delivery of tail-anchored (TA) proteins to the endoplasmic reticulum. Together with GET2, acts as a membrane receptor for soluble GET3, which recognizes and selectively binds the transmembrane domain of TA proteins in the cytosol. The GET complex cooperates with the HDEL receptor ERD2 to mediate the ATP-dependent retrieval of resident ER proteins that contain a C-terminal H-D-E-L retention signal from the Golgi to the ER. The sequence is that of Golgi to ER traffic protein 1 from Kluyveromyces lactis (strain ATCC 8585 / CBS 2359 / DSM 70799 / NBRC 1267 / NRRL Y-1140 / WM37) (Yeast).